The sequence spans 983 residues: Poly [ADP-ribose] polymerase 1 (983 aa).

2 consecutive PARP-type zinc fingers follow at residues Trp8–Ala91 and Tyr114–Leu194. Zn(2+) is bound by residues Cys20, Cys23, His52, Cys55, Cys126, Cys129, His156, and Cys159. The interval Ala197–Glu246 is disordered. Over residues Arg215–Lys226 the composition is skewed to basic and acidic residues. Residues Thr236–Pro375 form the PADR1 zinc-binding domain. The tract at residues Gly301–Lys345 is zinc ribbon. Zn(2+) is bound by residues Cys306, Cys309, Cys322, and Cys332. The tract at residues Pro369–Glu397 is disordered. A compositionally biased stretch (polar residues) spans Gly379–Lys388. The BRCT domain maps to Ser394–Ile484. In terms of domain architecture, WGR spans His511–Phe611. One can recognise a PARP alpha-helical domain in the interval Ser633–Gly751. Residues Glu758–Arg983 form the PARP catalytic domain.

The protein belongs to the ARTD/PARP family.

It is found in the nucleus. It catalyses the reaction NAD(+) + (ADP-D-ribosyl)n-acceptor = nicotinamide + (ADP-D-ribosyl)n+1-acceptor + H(+).. The enzyme catalyses L-aspartyl-[protein] + NAD(+) = 4-O-(ADP-D-ribosyl)-L-aspartyl-[protein] + nicotinamide. The catalysed reaction is L-glutamyl-[protein] + NAD(+) = 5-O-(ADP-D-ribosyl)-L-glutamyl-[protein] + nicotinamide. Involved in the base excision repair (BER) pathway, by catalyzing the poly(ADP-ribosyl)ation of a limited number of acceptor proteins involved in chromatin architecture and in DNA metabolism. This modification follows DNA damages and appears as an obligatory step in a detection/signaling pathway leading to the reparation of DNA strand breaks. The sequence is that of Poly [ADP-ribose] polymerase 1 (PARP1) from Arabidopsis thaliana (Mouse-ear cress).